A 311-amino-acid polypeptide reads, in one-letter code: Transcription factor BIM2 (311 aa).

Disordered stretches follow at residues 1–60 and 271–311; these read MRTG…RRSK and ANQG…MKTL. 2 stretches are compositionally biased toward basic and acidic residues: residues 33-44 and 51-60; these read SNRDSKENDKAS and SVTEQRRRSK. A bHLH domain is found at 45–95; it reads AIRSKHSVTEQRRRSKINERFQILRELIPNSEQKRDTASFLLEVIDYVQYL.

As to quaternary structure, homodimer. Interacts with the N-terminus of BZR2/BES1. Expressed constitutively in roots, leaves, stems, and flowers.

It localises to the nucleus. Functionally, positive brassinosteroid-signaling protein. The polypeptide is Transcription factor BIM2 (BIM2) (Arabidopsis thaliana (Mouse-ear cress)).